The chain runs to 260 residues: Proteasome subunit alpha (260 aa).

The protein belongs to the peptidase T1A family. In terms of assembly, the 20S proteasome core is composed of 14 alpha and 14 beta subunits that assemble into four stacked heptameric rings, resulting in a barrel-shaped structure. The two inner rings, each composed of seven catalytic beta subunits, are sandwiched by two outer rings, each composed of seven alpha subunits. The catalytic chamber with the active sites is on the inside of the barrel. Has a gated structure, the ends of the cylinder being occluded by the N-termini of the alpha-subunits. Is capped at one or both ends by the proteasome regulatory ATPase, PAN.

The protein resides in the cytoplasm. With respect to regulation, the formation of the proteasomal ATPase PAN-20S proteasome complex, via the docking of the C-termini of PAN into the intersubunit pockets in the alpha-rings, triggers opening of the gate for substrate entry. Interconversion between the open-gate and close-gate conformations leads to a dynamic regulation of the 20S proteasome proteolysis activity. Its function is as follows. Component of the proteasome core, a large protease complex with broad specificity involved in protein degradation. The chain is Proteasome subunit alpha from Pyrococcus abyssi (strain GE5 / Orsay).